The chain runs to 994 residues: Sarcoplasmic/endoplasmic reticulum calcium ATPase 1 (994 aa).

Topologically, residues 1–48 are cytoplasmic; that stretch reads MEAAHSKSTEECLSYFGVSETTGLTPDQVKRHLEKYGPNELPAEEGKS. Residues 49–69 traverse the membrane as a helical segment; it reads LWELVVEQFEDLLVRILLLAA. The Lumenal portion of the chain corresponds to 70-89; sequence CISFVLAWFEEGEETVTAFV. A helical membrane pass occupies residues 90–110; the sequence is EPFVILLILIANAIVGVWQER. Residues 111–253 lie on the Cytoplasmic side of the membrane; sequence NAENAIEALK…QDKTPLQQKL (143 aa). The helical transmembrane segment at 254 to 273 threads the bilayer; sequence DEFGEQLSKVISLICVAVWL. Residues 274–295 lie on the Lumenal side of the membrane; it reads INIGHFNDPVHGGSWFRGAIYY. A helical transmembrane segment spans residues 296–313; the sequence is FKIAVALAVAAIPEGLPA. Ca(2+)-binding residues include V304, A305, I307, and E309. At 314–757 the chain is on the cytoplasmic side; the sequence is VITTCLALGT…EEGRAIYNNM (444 aa). The 4-aspartylphosphate intermediate role is filled by D351. Mg(2+)-binding residues include D351 and T353. T353 provides a ligand contact to ATP. At T441 the chain carries Phosphothreonine. Residues E442, R489, K515, and R560 each contribute to the ATP site. T569 carries the post-translational modification Phosphothreonine. Residue S581 is modified to Phosphoserine. ATP-binding residues include T625, G626, and D627. Residue S643 is modified to Phosphoserine. The ATP site is built by R678 and K684. D703 contributes to the Mg(2+) binding site. N706 contacts ATP. Residues 758–777 traverse the membrane as a helical segment; sequence KQFIRYLISSNVGEVVCIFL. Ca(2+) is bound by residues N768 and E771. Topologically, residues 778–787 are lumenal; it reads TAALGLPEAL. A helical membrane pass occupies residues 788-808; it reads IPVQLLWVNLVTDGLPATALG. The interaction with PLN stretch occupies residues 788–808; it reads IPVQLLWVNLVTDGLPATALG. Residues N796, T799, and D800 each coordinate Ca(2+). Residues 809-828 lie on the Cytoplasmic side of the membrane; that stretch reads FNPPDLDIMDRPPRSPKEPL. A helical membrane pass occupies residues 829 to 851; that stretch reads ISGWLFFRYMAIGGYVGAATVGA. At 852 to 897 the chain is on the lumenal side; the sequence is AAWWFLYAEDGPHVSYHQLTHFMQCTEHNPEFDGLDCEVFEAPEPM. A disulfide bond links C876 and C888. The chain crosses the membrane as a helical span at residues 898-917; the sequence is TMALSVLVTIEMCNALNSLS. E908 provides a ligand contact to Ca(2+). The Cytoplasmic segment spans residues 918 to 930; that stretch reads ENQSLLRMPPWVN. The chain crosses the membrane as a helical span at residues 931 to 949; the sequence is IWLLGSICLSMSLHFLILY. The interval 932 to 943 is interaction with PLN; sequence WLLGSICLSMSL. At 950-964 the chain is on the lumenal side; sequence VDPLPMIFKLRALDF. Residues 965-985 form a helical membrane-spanning segment; it reads TQWLMVLKISLPVIGLDELLK. The Cytoplasmic portion of the chain corresponds to 986–994; the sequence is FIARNYLEG.

It belongs to the cation transport ATPase (P-type) (TC 3.A.3) family. Type IIA subfamily. In terms of assembly, interacts with sarcolipin (SLN). Interacts with phospholamban (PLN). Interacts with myoregulin (MRLN). Interacts with DWORF. Interacts with VMP1. The cofactor is Mg(2+).

It localises to the endoplasmic reticulum membrane. Its subcellular location is the sarcoplasmic reticulum membrane. It catalyses the reaction Ca(2+)(in) + ATP + H2O = Ca(2+)(out) + ADP + phosphate + H(+). Its activity is regulated as follows. Inhibited by sarcolipin (SLN) and myoregulin (MRLN). Has also been shown to be reversibly inhibited by phospholamban (PLN) at low calcium concentrations in vitro. Dephosphorylated PLN decreases the apparent affinity of the ATPase for calcium in vitro and this inhibition is regulated by the phosphorylation of PLN. Enhanced by DWORF; DWORF increases activity by displacing sarcolipin (SLN), phospholamban (PLN) and myoregulin (MRLN). Its function is as follows. Key regulator of striated muscle performance by acting as the major Ca(2+) ATPase responsible for the reuptake of cytosolic Ca(2+) into the sarcoplasmic reticulum. Catalyzes the hydrolysis of ATP coupled with the translocation of calcium from the cytosol to the sarcoplasmic reticulum lumen. Contributes to calcium sequestration involved in muscular excitation/contraction. The protein is Sarcoplasmic/endoplasmic reticulum calcium ATPase 1 (Atp2a1) of Mus musculus (Mouse).